We begin with the raw amino-acid sequence, 919 residues long: Rho guanine nucleotide exchange factor 1 (919 aa).

In terms of domain architecture, RGSL spans 39-230 (DQNSQFQSLE…SLYMRHLGVR (192 aa)). The segment at 247-402 (VMGNRRSDEP…PPGWRELVPS (156 aa)) is disordered. Residues 281–310 (DCRHLKVEVDEKPGPADRKGSLGISSRDRT) are compositionally biased toward basic and acidic residues. Positions 363 to 379 (STEDNGETESPEPGDDG) are enriched in acidic residues. S372 is subject to Phosphoserine. One can recognise a DH domain in the interval 414–603 (KRQEVISELL…REILHHVNQA (190 aa)). The PH domain maps to 645–758 (KLVHEGPLTW…WCALITETAG (114 aa)). T693 is subject to Phosphothreonine. Residue Y736 is modified to Phosphotyrosine; by JAK2. Disordered regions lie at residues 761–800 (KVPA…PADA) and 839–865 (TEED…PTHT). Positions 775–787 (PSSTREPLLSSSE) are enriched in low complexity. Residues 864-893 (HTQEVEENLLSLEVVIKQLEELEEEFCRLR) are a coiled coil. Position 904 is a phosphoserine (S904).

As to quaternary structure, interacts with RHOA, GNA12 and GNA13. Homooligomerizes through the coiled coil region. Interacts with CTNNAL1. May interact with CCPG1. Phosphorylated by PKCA. Angiotensin-2 induced Tyr-736 phosphorylation is mediated by JAK2.

The protein localises to the cytoplasm. Its subcellular location is the membrane. Its function is as follows. Seems to play a role in the regulation of RhoA GTPase by guanine nucleotide-binding alpha-12 (GNA12) and alpha-13 (GNA13) subunits. Acts as a GTPase-activating protein (GAP) for GNA12 and GNA13, and as guanine nucleotide exchange factor (GEF) for RhoA GTPase. Activated G alpha 13/GNA13 stimulates the RhoGEF activity through interaction with the RGS-like domain. This GEF activity is inhibited by binding to activated GNA12. Mediates angiotensin-2-induced RhoA activation. In lymphoid follicles, may trigger activation of GNA13 as part of S1PR2-dependent signaling pathway that leads to inhibition of germinal center (GC) B cell growth and migration outside the GC niche. The protein is Rho guanine nucleotide exchange factor 1 (Arhgef1) of Rattus norvegicus (Rat).